The primary structure comprises 216 residues: Large ribosomal subunit protein uL3 (216 aa).

The tract at residues 137-157 (GASHGAHKNHRKPGSIGGAST) is disordered.

Belongs to the universal ribosomal protein uL3 family. Part of the 50S ribosomal subunit. Forms a cluster with proteins L14 and L19.

Functionally, one of the primary rRNA binding proteins, it binds directly near the 3'-end of the 23S rRNA, where it nucleates assembly of the 50S subunit. The protein is Large ribosomal subunit protein uL3 of Paenarthrobacter aurescens (strain TC1).